The primary structure comprises 413 residues: Adenylosuccinate synthetase (413 aa).

Residues 11 to 17 (GDEGKGK) and 39 to 41 (GHT) each bind GTP. The active-site Proton acceptor is the Asp-12. Mg(2+) is bound by residues Asp-12 and Gly-39. Residues 12–15 (DEGK), 37–40 (NAGH), Thr-125, Arg-139, Gln-217, Thr-232, and Arg-296 each bind IMP. The active-site Proton donor is the His-40. A substrate-binding site is contributed by 292-298 (TTTGRPR). GTP is bound by residues Arg-298, 324 to 326 (KLD), and 402 to 404 (STG).

This sequence belongs to the adenylosuccinate synthetase family. In terms of assembly, homodimer. Mg(2+) is required as a cofactor.

It is found in the cytoplasm. The catalysed reaction is IMP + L-aspartate + GTP = N(6)-(1,2-dicarboxyethyl)-AMP + GDP + phosphate + 2 H(+). The protein operates within purine metabolism; AMP biosynthesis via de novo pathway; AMP from IMP: step 1/2. Plays an important role in the de novo pathway of purine nucleotide biosynthesis. Catalyzes the first committed step in the biosynthesis of AMP from IMP. The protein is Adenylosuccinate synthetase of Nautilia profundicola (strain ATCC BAA-1463 / DSM 18972 / AmH).